Consider the following 843-residue polypeptide: Molybdenum cofactor sulfurase (843 aa).

Position 241 is an N6-(pyridoxal phosphate)lysine (Lys-241). Cys-405 is an active-site residue. The region spanning 657–836 (QYLRKFVMPG…LMVGDIVIPS (180 aa)) is the MOSC domain.

It belongs to the class-V pyridoxal-phosphate-dependent aminotransferase family. MOCOS subfamily. Pyridoxal 5'-phosphate is required as a cofactor.

The catalysed reaction is Mo-molybdopterin + L-cysteine + AH2 = thio-Mo-molybdopterin + L-alanine + A + H2O. Its function is as follows. Sulfurates the molybdenum cofactor. Sulfation of molybdenum is essential for xanthine dehydrogenase (XDH) and aldehyde oxidase (ADO) enzymes in which molybdenum cofactor is liganded by 1 oxygen and 1 sulfur atom in active form. This is Molybdenum cofactor sulfurase from Aspergillus fumigatus (strain CBS 144.89 / FGSC A1163 / CEA10) (Neosartorya fumigata).